A 98-amino-acid polypeptide reads, in one-letter code: Large ribosomal subunit protein bL27 (98 aa).

Polar residues predominate over residues 1 to 11 (MASKASGGSTR). Residues 1–20 (MASKASGGSTRNGRDSISKR) are disordered.

This sequence belongs to the bacterial ribosomal protein bL27 family.

The sequence is that of Large ribosomal subunit protein bL27 from Aquifex aeolicus (strain VF5).